Here is a 1436-residue protein sequence, read N- to C-terminus: MTEQQKFKVLADQIKISNQLDAEILNSGELTRIDVSNKNRTWEFHITLPQFLAHEDYLLFINAIEQEFKDIANVTCRFTVTNGTNQDEHAIKYFGHCIDQTALSPKVKGQLKQKKLIMSGKVLKVMVSNDIERNHFDKACNGSLIKAFRNCGFDIDKIIFETNDNDQEQNLASLEAHIQEEDEQSARLATEKLEKMKAEKAKQQDNNESAVDKCQIGKPIQIENIKPIESIIEEEFKVAIEGVIFDINLKELKSGRHIVEIKVTDYTDSLVLKMFTRKNKDDLEHFKALSVGKWVRAQGRIEEDTFIRDLVMMMSDIEEIKKATKKDKAEEKRVEFHLHTAMSQMDGIPNIGAYVKQAADWGHPAIAVTDHNVVQAFPDAHAAAEKHGIKMIYGMEGMLVDDGVPIAYKPQDVVLKDATYVVFDVETTGLSNQYDKIIELAAVKVHNGEIIDKFERFSNPHERLSETIINLTHITDDMLVDAPEIEEVLTEFKEWVGDAIFVAHNASFDMGFIDTGYERLGFGPSTNGVIDTLELSRTINTEYGKHGLNFLAKKYGVELTQHHRAIYDTEATAYIFIKMVQQMKELGVLNHNEINKKLSNEDAYKRARPSHVTLIVQNQQGLKNLFKIVSASLVKYFYRTPRIPRSLLDEYREGLLVGTACDEGELFTAVMQKDQSQVEKIAKYYDFIEIQPPALYQDLIDRELIRDTETLHEIYQRLIHAGDTAGIPVIATGNAHYLFEHDGIARKILIASQPGNPLNRSTLPEAHFRTTDEMLNEFHFLGEEKAHEIVVKNTNELADRIERVVPIKDELYTPRMEGANEEIRELSYANARKLYGEDLPQIVIDRLEKELKSIIGNGFAVIYLISQRLVKKSLDDGYLVGSRGSVGSSFVATMTEITEVNPLPPHYICPNCKTSEFFNDGSVGSGFDLPDKTCETCGAPLIKEGQDIPFETFLGFKGDKVPDIDLNFSGEYQPNAHNYTKVLFGEDKVFRAGTIGTVAEKTAFGYVKGYLNDQGIHKRGAEIDRLVKGCTGVKRTTGQHPGGIIVVPDYMDIYDFTPIQYPADDQNSAWMTTHFDFHSIHDNVLKLDILGHDDPTMIRMLQDLSGIDPKTIPVDDKEVMQIFSTPESLGVTEDEILCKTGTFGVPEFGTGFVRQMLEDTKPTTFSELVQISGLSHGTDVWLGNAQELIKTGICDLSSVIGCRDDIMVYLMYAGLEPSMAFKIMESVRKGKGLTEEMIETMKENEVPDWYLDSCLKIKYMFPKAHAAAYVLMAVRIAYFKVHHPLYYYASYFTIRASDFDLITMIKDKTSIRNTVKDMYSRYMDLGKKEKDVLTVLEIMNEMAHRGYRMQPISLEKSQAFEFIIEGDTLIPPFISVPGLGENVAKRIVEARDDGPFLSKEDLNKKAGLSQKIIEYLDELGSLPNLPDKAQLSIFDM.

The region spanning 420-576 is the Exonuclease domain; it reads YVVFDVETTG…YDTEATAYIF (157 aa).

It belongs to the DNA polymerase type-C family. PolC subfamily.

It is found in the cytoplasm. The catalysed reaction is DNA(n) + a 2'-deoxyribonucleoside 5'-triphosphate = DNA(n+1) + diphosphate. In terms of biological role, required for replicative DNA synthesis. This DNA polymerase also exhibits 3' to 5' exonuclease activity. This Staphylococcus aureus (strain MW2) protein is DNA polymerase III PolC-type.